Consider the following 356-residue polypeptide: Probable protein phosphatase 2C T23F11.1 (356 aa).

The PPM-type phosphatase domain maps to 23–286 (LVGSSCMQGW…DNMTVVLVGL (264 aa)). Residues aspartate 59, glycine 60, aspartate 228, and aspartate 277 each coordinate Mn(2+). The disordered stretch occupies residues 336–356 (NAANQEEEEDDNEPAPANFQV).

Belongs to the PP2C family. Mg(2+) serves as cofactor. Requires Mn(2+) as cofactor.

It catalyses the reaction O-phospho-L-seryl-[protein] + H2O = L-seryl-[protein] + phosphate. The catalysed reaction is O-phospho-L-threonyl-[protein] + H2O = L-threonyl-[protein] + phosphate. This Caenorhabditis elegans protein is Probable protein phosphatase 2C T23F11.1 (ppm-2).